Consider the following 553-residue polypeptide: Putative transport protein PM1071 (553 aa).

5 helical membrane passes run 4–24 (IAIT…IGHW), 28–48 (GVGL…HFTN), 65–85 (FGLI…FFAS), 91–111 (LKLN…VIVI), and 157–177 (MAYA…MWLI). RCK C-terminal domains follow at residues 190 to 276 (KNFL…VLGE) and 277 to 361 (EVDV…ILGN). Helical transmembrane passes span 371–391 (MLPV…PFHI), 403–425 (AGGP…LYWF), 439–459 (IVLF…DTLV), 464–484 (LEWM…VGIV), 496–516 (LCGL…ANAI), and 533–553 (LVMF…WTLL).

The protein belongs to the AAE transporter (TC 2.A.81) family. YidE subfamily.

Its subcellular location is the cell membrane. This is Putative transport protein PM1071 from Pasteurella multocida (strain Pm70).